A 1406-amino-acid polypeptide reads, in one-letter code: DNA-directed RNA polymerase subunit beta' (1406 aa).

Cys-72, Cys-74, Cys-87, and Cys-90 together coordinate Zn(2+). Residues Asp-462, Asp-464, and Asp-466 each coordinate Mg(2+). Zn(2+) is bound by residues Cys-816, Cys-891, Cys-898, and Cys-901.

This sequence belongs to the RNA polymerase beta' chain family. As to quaternary structure, the RNAP catalytic core consists of 2 alpha, 1 beta, 1 beta' and 1 omega subunit. When a sigma factor is associated with the core the holoenzyme is formed, which can initiate transcription. Mg(2+) serves as cofactor. It depends on Zn(2+) as a cofactor.

It carries out the reaction RNA(n) + a ribonucleoside 5'-triphosphate = RNA(n+1) + diphosphate. In terms of biological role, DNA-dependent RNA polymerase catalyzes the transcription of DNA into RNA using the four ribonucleoside triphosphates as substrates. The chain is DNA-directed RNA polymerase subunit beta' from Psychrobacter arcticus (strain DSM 17307 / VKM B-2377 / 273-4).